The following is a 301-amino-acid chain: Acetylglutamate kinase (301 aa).

Residues G68–G69, R90, and N195 each bind substrate.

This sequence belongs to the acetylglutamate kinase family. ArgB subfamily.

It localises to the cytoplasm. It catalyses the reaction N-acetyl-L-glutamate + ATP = N-acetyl-L-glutamyl 5-phosphate + ADP. Its pathway is amino-acid biosynthesis; L-arginine biosynthesis; N(2)-acetyl-L-ornithine from L-glutamate: step 2/4. In terms of biological role, catalyzes the ATP-dependent phosphorylation of N-acetyl-L-glutamate. The chain is Acetylglutamate kinase from Pseudomonas putida (strain ATCC 700007 / DSM 6899 / JCM 31910 / BCRC 17059 / LMG 24140 / F1).